We begin with the raw amino-acid sequence, 339 residues long: 5-dehydro-2-deoxygluconokinase (339 aa).

It belongs to the carbohydrate kinase PfkB family.

The catalysed reaction is 5-dehydro-2-deoxy-D-gluconate + ATP = 6-phospho-5-dehydro-2-deoxy-D-gluconate + ADP + H(+). The protein operates within polyol metabolism; myo-inositol degradation into acetyl-CoA; acetyl-CoA from myo-inositol: step 5/7. Its function is as follows. Catalyzes the phosphorylation of 5-dehydro-2-deoxy-D-gluconate (2-deoxy-5-keto-D-gluconate or DKG) to 6-phospho-5-dehydro-2-deoxy-D-gluconate (DKGP). The sequence is that of 5-dehydro-2-deoxygluconokinase from Clostridium botulinum (strain Alaska E43 / Type E3).